Consider the following 622-residue polypeptide: Low affinity potassium transport system protein Kup (622 aa).

The next 12 membrane-spanning stretches (helical) occupy residues 9–29 (LPAI…TSPL), 49–69 (VFGF…IKYL), 103–123 (VIMG…TPAI), 137–157 (PQLD…LFMI), 165–185 (VGKL…GLGL), 213–233 (VSFI…ALYA), 247–267 (WFTV…ALLL), 276–296 (PFFL…AALA), 337–357 (IYIP…IVSF), 363–383 (LAAA…ILST), 396–416 (FVAL…TANL), and 419–439 (LLSG…VMTT).

The protein belongs to the HAK/KUP transporter (TC 2.A.72) family.

The protein localises to the cell inner membrane. It carries out the reaction K(+)(in) + H(+)(in) = K(+)(out) + H(+)(out). In terms of biological role, responsible for the low-affinity transport of potassium into the cell. Likely operates as a K(+):H(+) symporter. In Shigella sonnei (strain Ss046), this protein is Low affinity potassium transport system protein Kup.